The sequence spans 497 residues: UDP-N-acetylmuramoyl-L-alanyl-D-glutamate--2,6-diaminopimelate ligase (497 aa).

Residues L27 and S29 each contribute to the UDP-N-acetyl-alpha-D-muramoyl-L-alanyl-D-glutamate site. 116–122 (GTNGKTT) contributes to the ATP binding site. Residues N157, 158-159 (TT), S185, Q191, and R193 contribute to the UDP-N-acetyl-alpha-D-muramoyl-L-alanyl-D-glutamate site. The residue at position 225 (K225) is an N6-carboxylysine. Meso-2,6-diaminopimelate-binding positions include R392, 416-419 (DNPR), G467, and E471. A Meso-diaminopimelate recognition motif motif is present at residues 416 to 419 (DNPR).

It belongs to the MurCDEF family. MurE subfamily. Mg(2+) is required as a cofactor. In terms of processing, carboxylation is probably crucial for Mg(2+) binding and, consequently, for the gamma-phosphate positioning of ATP.

The protein resides in the cytoplasm. The enzyme catalyses UDP-N-acetyl-alpha-D-muramoyl-L-alanyl-D-glutamate + meso-2,6-diaminopimelate + ATP = UDP-N-acetyl-alpha-D-muramoyl-L-alanyl-gamma-D-glutamyl-meso-2,6-diaminopimelate + ADP + phosphate + H(+). The protein operates within cell wall biogenesis; peptidoglycan biosynthesis. Functionally, catalyzes the addition of meso-diaminopimelic acid to the nucleotide precursor UDP-N-acetylmuramoyl-L-alanyl-D-glutamate (UMAG) in the biosynthesis of bacterial cell-wall peptidoglycan. The polypeptide is UDP-N-acetylmuramoyl-L-alanyl-D-glutamate--2,6-diaminopimelate ligase (Buchnera aphidicola subsp. Schizaphis graminum (strain Sg)).